The chain runs to 41 residues: Pathogenesis-related protein (41 aa).

The protein belongs to the CRISP family.

Probably involved in the defense reaction of plants against pathogens. The protein is Pathogenesis-related protein of Cucumis melo (Muskmelon).